A 283-amino-acid polypeptide reads, in one-letter code: MMTHWPSPAKLNLFLYITGQRADGYHTLQTLFQFLDYGDTLHIEPRHDGEIHLLTPVNDVENEDNLIVRAARLLMKVASESGRLPAGSGADISIEKRLPMGGGLGGGSSNAATVLVALNHLWQCGLSIDELATLGLTLGADVPVFVRGHAAFAEGVGEILTPVNPPEKWYLVAHPGVSIPTPVIFKDPQLPRNTPKRSIDTLLKCEFSNDCEVIARKRFREVDAALSWLLEYAPSRLTGTGACVFAEFDTESCARQVLEQAPEWLNAFVAKGVNLSPLHRELL.

Residue Lys10 is part of the active site. 99-109 (PMGGGLGGGSS) is an ATP binding site. Residue Asp141 is part of the active site.

This sequence belongs to the GHMP kinase family. IspE subfamily. Homodimer.

The enzyme catalyses 4-CDP-2-C-methyl-D-erythritol + ATP = 4-CDP-2-C-methyl-D-erythritol 2-phosphate + ADP + H(+). It participates in isoprenoid biosynthesis; isopentenyl diphosphate biosynthesis via DXP pathway; isopentenyl diphosphate from 1-deoxy-D-xylulose 5-phosphate: step 3/6. In terms of biological role, catalyzes the phosphorylation of the position 2 hydroxy group of 4-diphosphocytidyl-2C-methyl-D-erythritol. This Salmonella paratyphi C (strain RKS4594) protein is 4-diphosphocytidyl-2-C-methyl-D-erythritol kinase.